Consider the following 213-residue polypeptide: Nicotinate-nucleotide adenylyltransferase (213 aa).

It belongs to the NadD family.

The catalysed reaction is nicotinate beta-D-ribonucleotide + ATP + H(+) = deamido-NAD(+) + diphosphate. It functions in the pathway cofactor biosynthesis; NAD(+) biosynthesis; deamido-NAD(+) from nicotinate D-ribonucleotide: step 1/1. In terms of biological role, catalyzes the reversible adenylation of nicotinate mononucleotide (NaMN) to nicotinic acid adenine dinucleotide (NaAD). This chain is Nicotinate-nucleotide adenylyltransferase, found in Salmonella typhimurium (strain LT2 / SGSC1412 / ATCC 700720).